Reading from the N-terminus, the 611-residue chain is Protein decapping 5 (611 aa).

Residues 9 to 92 form the Sm domain; the sequence is KSSSAADSYV…IKDLQVKASP (84 aa). Disordered regions lie at residues 111–153, 183–238, 264–301, 318–362, 396–455, and 519–611; these read HYPS…AMPL, GLPQ…PSSL, SSSL…PTLP, EAST…DKPK, QVSS…AGRS, and FFDS…NRTT. 2 stretches are compositionally biased toward polar residues: residues 117–140 and 203–214; these read PTSG…NGQP and NSLQQPLQYPNF. Residues 264–281 show a composition bias toward low complexity; it reads SSSLQSTLQSAPSPSLAS. Polar residues-rich tracts occupy residues 318 to 330, 396 to 413, and 424 to 437; these read EAST…NKPS, QVSS…TSEA, and ARPT…SFPN. Over residues 441–453 the composition is skewed to basic residues; it reads YRGRGRGRGRGAG. The DFDF domain maps to 453-489; the sequence is GRSHQVMKFTEDFDFTAMNEKFNKDEVWGHLGKSTTL. An FFD box motif is present at residues 512–527; it reads PVYNKDDFFDSLSSNT. Residues 528–547 are compositionally biased toward basic and acidic residues; that stretch reads IDRESQNSRPRFSEQRKLDT. Positions 534 to 554 match the TFG box motif; the sequence is NSRPRFSEQRKLDTETFGEFS. The segment covering 559–604 has biased composition (gly residues); it reads GRGGRGGYGRNNGYSRGGYGGRGYGGYGGRGGGGGGYGYGGRGQGR.

Belongs to the LSM14 family. As to quaternary structure, homodimer. Component of the decapping complex. Interacts with DCP1 and DCP2.

The protein localises to the cytoplasm. Its subcellular location is the P-body. In terms of biological role, as a component of the decapping complex, involved in the degradation of mRNAs. Promotes P-body formation. Translational repressor. The polypeptide is Protein decapping 5 (DCP5) (Arabidopsis thaliana (Mouse-ear cress)).